The sequence spans 406 residues: MAALPRQGIIILTYVLAALELTCLFMQFSILPYLSRTLGLDSVSFGYLQTTFGVLQLLGGPVFGRFADQCGARAALSLSFLAASALYLLLVASCSPALPGVFLLFASRIPSALMHTLPAAQMVITDLTAPTERPAALGRLGLCFGIGIIFGSLLGGTLNTAYGIQCPAILAFVVTLLGAVLSFTCVPATTKEASVQSAPQGGTKASVFDLKAITRLLLLPRVLPVFLVKVISGLPSGLFLVMFSIISMDFFQLEAAQAGYLMSFFGILQMMIQGLVIGRLSTHFPEEALLRSSVLVFAVVGLGMALMSSVLHFCFLMPGLVFSLCTLNVVTDSMLTKAVSASDTGTMLGLSASVQPLTRTLGPTLGGLLYRSYGVPIFGHVQLMVNLLVLLVLWKKPLSQKGEKAR.

Transmembrane regions (helical) follow at residues 8–28 (GIII…FMQF), 43–63 (VSFG…GPVF), 85–105 (ALYL…FLLF), 140–160 (LGLC…TLNT), 168–188 (AILA…CVPA), 226–246 (FLVK…FSII), 258–278 (AGYL…LVIG), 295–315 (LVFA…HFCF), 316–336 (LMPG…SMLT), and 374–394 (GVPI…LVLW).

The protein belongs to the major facilitator (TC 2.A.1) superfamily. Organic cation transporter (TC 2.A.1.19) family. In terms of assembly, interacts with RNF167. In terms of tissue distribution, expressed at high levels in fetal and adult kidney and liver, and extraembryonic membranes (yolk sac). Expressed at moderate levels in intestine, heart, lung and testis.

It is found in the apical cell membrane. Functionally, may act as a transporter of organic cations based on a proton efflux antiport mechanism. May play a role in the transport of chloroquine and quinidine-related compounds in kidney. Plays a role in the regulation of lipid metabolism. This chain is Solute carrier family 22 member 18 (Slc67a1), found in Mus musculus (Mouse).